A 51-amino-acid chain; its full sequence is Protein SspM (51 aa).

Belongs to the alpha/beta-type SASP family.

The polypeptide is Protein SspM (sspM) (Mycolicibacterium phlei (Mycobacterium phlei)).